The primary structure comprises 91 residues: Putative regulatory protein CLB_2388 (91 aa).

It belongs to the RemA family.

This Clostridium botulinum (strain ATCC 19397 / Type A) protein is Putative regulatory protein CLB_2388.